We begin with the raw amino-acid sequence, 386 residues long: MAAIPALDPEAEPSMDVILVGSSELSSSVSPGTGRDLIAYEVKANQRNIEDICICCGSLQVHTQHPLFEGGICAPCKDKFLDALFLYDDDGYQSYCSICCSGETLLICGNPDCTRCYCFECVDSLVGPGTSGKVHAMSNWVCYLCLPSSRSGLLQRRRKWRSQLKAFYDRESENPLEMFETVPVWRRQPVRVLSLFEDIKKELTSLGFLESGSDPGQLKHVVDVTDTVRKDVEEWGPFDLVYGATPPLGHTCDRPPSWYLFQFHRLLQYARPKPGSPRPFFWMFVDNLVLNKEDLDVASRFLEMEPVTIPDVHGGSLQNAVRVWSNIPAIRSRHWALVSEEELSLLAQNKQSSKLAAKWPTKLVKNCFLPLREYFKYFSTELTSSL.

The ADD domain maps to glutamate 41–glutamate 173. The GATA-type; atypical zinc-finger motif lies at isoleucine 52–aspartate 82. A PHD-type; atypical zinc finger spans residues glutamine 93–serine 149.

Homodimer. Heterotetramer composed of 1 DNMT3A homodimer and 2 DNMT3L subunits (DNMT3L-DNMT3A-DNMT3A-DNMT3L). Interacts with histone H3 (via N-terminus); interaction is strongly inhibited by methylation at lysine 4 (H3K4me). Interacts with EZH2; the interaction is direct. Interacts with SPOCD1. In terms of tissue distribution, expressed at low levels in several tissues including testis, ovary, and thymus.

It is found in the nucleus. Functionally, catalytically inactive regulatory factor of DNA methyltransferases that can either promote or inhibit DNA methylation depending on the context. Essential for the function of DNMT3A and DNMT3B: activates DNMT3A and DNMT3B by binding to their catalytic domain. Acts by accelerating the binding of DNA and S-adenosyl-L-methionine (AdoMet) to the methyltransferases and dissociates from the complex after DNA binding to the methyltransferases. Recognizes unmethylated histone H3 lysine 4 (H3K4me0) and induces de novo DNA methylation by recruitment or activation of DNMT3. Plays a key role in embryonic stem cells and germ cells. In germ cells, required for the methylation of imprinted loci together with DNMT3A. In male germ cells, specifically required to methylate retrotransposons, preventing their mobilization. Plays a key role in embryonic stem cells (ESCs) by acting both as an positive and negative regulator of DNA methylation. While it promotes DNA methylation of housekeeping genes together with DNMT3A and DNMT3B, it also acts as an inhibitor of DNA methylation at the promoter of bivalent genes. Interacts with the EZH2 component of the PRC2/EED-EZH2 complex, preventing interaction of DNMT3A and DNMT3B with the PRC2/EED-EZH2 complex, leading to maintain low methylation levels at the promoters of bivalent genes. Promotes differentiation of ESCs into primordial germ cells by inhibiting DNA methylation at the promoter of RHOX5, thereby activating its expression. This Homo sapiens (Human) protein is DNA (cytosine-5)-methyltransferase 3-like (DNMT3L).